The primary structure comprises 137 residues: Putative pre-16S rRNA nuclease (137 aa).

It belongs to the YqgF nuclease family.

The protein localises to the cytoplasm. Its function is as follows. Could be a nuclease involved in processing of the 5'-end of pre-16S rRNA. This chain is Putative pre-16S rRNA nuclease, found in Anaeromyxobacter sp. (strain Fw109-5).